Here is a 114-residue protein sequence, read N- to C-terminus: Probable 4-amino-4-deoxy-L-arabinose-phosphoundecaprenol flippase subunit ArnE (114 aa).

A run of 3 helical transmembrane segments spans residues 38 to 58 (LTLR…LLWL), 64 to 84 (LPLS…TLAA), and 94 to 114 (LRHW…SWHL). Residues 43–112 (LAIAVVSLGL…IMFGILLMSW (70 aa)) form the EamA domain.

Belongs to the ArnE family. As to quaternary structure, heterodimer of ArnE and ArnF.

Its subcellular location is the cell inner membrane. It participates in bacterial outer membrane biogenesis; lipopolysaccharide biosynthesis. In terms of biological role, translocates 4-amino-4-deoxy-L-arabinose-phosphoundecaprenol (alpha-L-Ara4N-phosphoundecaprenol) from the cytoplasmic to the periplasmic side of the inner membrane. The chain is Probable 4-amino-4-deoxy-L-arabinose-phosphoundecaprenol flippase subunit ArnE from Yersinia pseudotuberculosis serotype O:3 (strain YPIII).